The sequence spans 313 residues: Porphobilinogen deaminase (313 aa).

At Cys-242 the chain carries S-(dipyrrolylmethanemethyl)cysteine.

Belongs to the HMBS family. Monomer. Requires dipyrromethane as cofactor.

The enzyme catalyses 4 porphobilinogen + H2O = hydroxymethylbilane + 4 NH4(+). The protein operates within porphyrin-containing compound metabolism; protoporphyrin-IX biosynthesis; coproporphyrinogen-III from 5-aminolevulinate: step 2/4. Functionally, tetrapolymerization of the monopyrrole PBG into the hydroxymethylbilane pre-uroporphyrinogen in several discrete steps. The chain is Porphobilinogen deaminase from Escherichia coli (strain SE11).